Consider the following 266-residue polypeptide: MFKHTRKLQYNAKPDRSDPIMARRLQESLGGQWGETTGMMSYLSQGWASTGAEKYKDLLLDTGTEEMAHVEMISTMIGYLLEDAPFGPEDLKRDPSLATTMAGMDPEHSLVHGLNASLNNPNGAAWNAGYVTSSGNLVADMRFNVVRESEARLQVSRLYSMTEDEGVRDMLKFLLARETQHQLQFMKAQEELEEKYGIIVPGDMKEIEHSEFSHVLMNFSDGDGSKAFEGQVAKDGEKFTYQENPEAMGGIPHIKPGDPRLHNHQG.

Mn(2+) is bound at residue E35. The Ca(2+) site is built by D57 and D61. 4 residues coordinate Mn(2+): E66, H69, E148, and H181. Ca(2+)-binding residues include N218, S220, and G222. Residues 243-266 (ENPEAMGGIPHIKPGDPRLHNHQG) are disordered. The segment covering 255–266 (KPGDPRLHNHQG) has biased composition (basic and acidic residues).

It belongs to the manganese catalase family. Homohexamer. It depends on Ca(2+) as a cofactor. Requires Mn(2+) as cofactor.

The enzyme catalyses 2 H2O2 = O2 + 2 H2O. In terms of biological role, catalyzes the decomposition of hydrogen peroxide into water and oxygen. This is Manganese catalase from Lactiplantibacillus plantarum (Lactobacillus plantarum).